We begin with the raw amino-acid sequence, 173 residues long: Alkyl hydroperoxide reductase AhpD (173 aa).

The active-site Proton donor is cysteine 131. Cysteine 131 and cysteine 134 are disulfide-bonded. Residue cysteine 134 is the Cysteine sulfenic acid (-SOH) intermediate of the active site.

This sequence belongs to the AhpD family.

It catalyses the reaction N(6)-[(R)-dihydrolipoyl]-L-lysyl-[lipoyl-carrier protein] + a hydroperoxide = N(6)-[(R)-lipoyl]-L-lysyl-[lipoyl-carrier protein] + an alcohol + H2O. In terms of biological role, antioxidant protein with alkyl hydroperoxidase activity. Required for the reduction of the AhpC active site cysteine residues and for the regeneration of the AhpC enzyme activity. The polypeptide is Alkyl hydroperoxide reductase AhpD (Rhizorhabdus wittichii (strain DSM 6014 / CCUG 31198 / JCM 15750 / NBRC 105917 / EY 4224 / RW1) (Sphingomonas wittichii)).